The primary structure comprises 72 residues: uncharacterized protein (72 aa).

Low complexity predominate over residues 1–38 (MSIFSSLSSLSTGSLKSSVSSIENGSSSGSFGSNETSG). The segment at 1 to 42 (MSIFSSLSSLSTGSLKSSVSSIENGSSSGSFGSNETSGWGQH) is disordered.

This is an uncharacterized protein from Dictyostelium discoideum (Social amoeba).